We begin with the raw amino-acid sequence, 125 residues long: Small ribosomal subunit protein uS13 (125 aa).

The disordered stretch occupies residues 94 to 125; sequence SLPVRGQRTQTNARTRKGKRKTVAGKKKAVKK. Residues 107 to 125 show a composition bias toward basic residues; the sequence is RTRKGKRKTVAGKKKAVKK.

The protein belongs to the universal ribosomal protein uS13 family. Part of the 30S ribosomal subunit. Forms a loose heterodimer with protein S19. Forms two bridges to the 50S subunit in the 70S ribosome.

Its function is as follows. Located at the top of the head of the 30S subunit, it contacts several helices of the 16S rRNA. In the 70S ribosome it contacts the 23S rRNA (bridge B1a) and protein L5 of the 50S subunit (bridge B1b), connecting the 2 subunits; these bridges are implicated in subunit movement. Contacts the tRNAs in the A and P-sites. This is Small ribosomal subunit protein uS13 from Prosthecochloris aestuarii (strain DSM 271 / SK 413).